Consider the following 1196-residue polypeptide: FIP1[V]-like protein (1196 aa).

Disordered stretches follow at residues Met1 to Gly102, Gly117 to Tyr248, Gly268 to Leu300, Gly413 to Arg472, and Ser485 to Pro1174. The segment covering Phe18–Pro31 has biased composition (pro residues). Over residues Gly117–Glu126 the composition is skewed to polar residues. Residues Val129–Gly141 show a composition bias toward gly residues. 2 stretches are compositionally biased toward acidic residues: residues Glu142–Leu154 and Asn179–Pro190. Residues Ala226–Thr236 are compositionally biased toward gly residues. Over residues Gly268 to Gly278 the composition is skewed to low complexity. Positions Lys518–Arg548 are enriched in basic and acidic residues. Residues Ser549–Pro561 are compositionally biased toward polar residues. 2 stretches are compositionally biased toward basic and acidic residues: residues Arg565–Lys592 and Gly608–Ser641. Residues Arg643 to His657 are compositionally biased toward polar residues. 5 stretches are compositionally biased toward basic and acidic residues: residues Lys661–Arg673, Ser699–Glu802, Ser810–Arg918, Arg925–Ala945, and Asn953–Asp971. 2 consecutive short sequence motifs (nuclear localization signal) follow at residues Asp704–Val711 and Arg734–Asp741. Polar residues predominate over residues Glu998–Ala1021. 3 stretches are compositionally biased toward basic and acidic residues: residues Asp1046–Val1071, Lys1103–Lys1137, and Thr1151–Ser1163.

The protein belongs to the FIP1 family. Component of the cleavage and polyadenylation specificity factor (CPSF) complex. Forms a complex with cleavage and polyadenylation specificity factor (CPSF) subunits CFIS1, CFIS2, CPSF30, CSTF50, CSTF64, CSTF77, FIPS3, PABN1, PABN2, PABN3, PAPS4, CFIM25 and PABN1. Binds RNA. As to expression, expressed in leaves, stems, flower tissues and roots.

It localises to the nucleus. In terms of biological role, essential gene. Component of the cleavage and polyadenylation specificity factor (CPSF) complex that plays a key role in pre-mRNA 3'-end formation, recognizing the AAUAAA signal sequence and interacting with poly(A) polymerase and other factors to bring about cleavage and poly(A) addition. FIP1L1 contributes to poly(A) site recognition and stimulates poly(A) addition. Binds to U-rich RNA sequence elements surrounding the poly(A) site. May act to tether poly(A) polymerase to the CPSF complex. In Arabidopsis thaliana (Mouse-ear cress), this protein is FIP1[V]-like protein.